The following is a 457-amino-acid chain: Cell division protein FtsA (457 aa).

The protein belongs to the FtsA/MreB family. As to quaternary structure, self-interacts. Interacts with FtsZ.

It localises to the cell membrane. Cell division protein that is involved in the assembly of the Z ring. May serve as a membrane anchor for the Z ring. Increased expression restores growth to a PBP2b (penA) deletion strain as well as mreCD and rodA deletions, but not gpsB or rodZ deletions. Does not restore wild-type cell morphology to the penA deletion. The chain is Cell division protein FtsA from Streptococcus pneumoniae serotype 2 (strain D39 / NCTC 7466).